We begin with the raw amino-acid sequence, 167 residues long: SsrA-binding protein (167 aa).

A disordered region spans residues 139–167 (QAHDKRHAEKEREWQRDKQRIMRAHNRNA). A compositionally biased stretch (basic and acidic residues) spans 144–158 (RHAEKEREWQRDKQR).

This sequence belongs to the SmpB family.

It localises to the cytoplasm. Its function is as follows. Required for rescue of stalled ribosomes mediated by trans-translation. Binds to transfer-messenger RNA (tmRNA), required for stable association of tmRNA with ribosomes. tmRNA and SmpB together mimic tRNA shape, replacing the anticodon stem-loop with SmpB. tmRNA is encoded by the ssrA gene; the 2 termini fold to resemble tRNA(Ala) and it encodes a 'tag peptide', a short internal open reading frame. During trans-translation Ala-aminoacylated tmRNA acts like a tRNA, entering the A-site of stalled ribosomes, displacing the stalled mRNA. The ribosome then switches to translate the ORF on the tmRNA; the nascent peptide is terminated with the 'tag peptide' encoded by the tmRNA and targeted for degradation. The ribosome is freed to recommence translation, which seems to be the essential function of trans-translation. The chain is SsrA-binding protein from Xylella fastidiosa (strain M23).